The chain runs to 226 residues: MALSDEQVKSELSKMQAFIEKEAKEKAKEIKLKADEEYEIEKASIVRSETAAIDSTYEQKLKKASLAQQITKSTIGNKTRLRILSTKDEVLHEIFDEAEAELKKITKDKKQYKPVLVGLIEEGVLALMEPKVSIKVREQDVDVAKEAITEAAKNFEEKAKFKVEISIDDKNFLAKDIAGGIVVVNGSGKIEVDNTLEERLKILSEEALPAIRLELFGPSTTRKFFD.

It belongs to the V-ATPase E subunit family. As to quaternary structure, V-ATPase is a heteromultimeric enzyme composed of a peripheral catalytic V1 complex (components A to H) attached to an integral membrane V0 proton pore complex (components: a, c, c', c'', d, e, f and VOA1).

The protein resides in the vacuole membrane. In terms of biological role, subunit of the V1 complex of vacuolar(H+)-ATPase (V-ATPase), a multisubunit enzyme composed of a peripheral complex (V1) that hydrolyzes ATP and a membrane integral complex (V0) that translocates protons. V-ATPase is responsible for acidifying and maintaining the pH of intracellular compartments. The sequence is that of V-type proton ATPase subunit E (VMA4) from Candida albicans (Yeast).